Here is a 208-residue protein sequence, read N- to C-terminus: Proheparin-binding EGF-like growth factor (208 aa).

The first 19 residues, 1 to 19 (MKLLPSVVLKLLLAAVLSA), serve as a signal peptide directing secretion. Residues 20-62 (LVTGESLEQLRRGLAAGTSNPDPSTGSTDQLLRLGGGRDRKVR) constitute a propeptide that is removed on maturation. The Extracellular portion of the chain corresponds to 20–160 (LVTGESLEQL…ENRLYTYDHT (141 aa)). Residues 34-55 (AAGTSNPDPSTGSTDQLLRLGG) are disordered. Residues 36 to 49 (GTSNPDPSTGSTDQ) are compositionally biased toward polar residues. O-linked (GalNAc...) threonine glycosylation is found at T75 and T85. Positions 81–104 (QALATPSKEEHGKRKKKGKGLGKK) are disordered. Basic residues predominate over residues 93 to 102 (KRKKKGKGLG). One can recognise an EGF-like domain in the interval 104-144 (KRDPCLRKYKDFCIHGECKYVKELRAPSCICHPGYHGERCH). Cystine bridges form between C108/C121, C116/C132, and C134/C143. The tract at residues 136–148 (PGYHGERCHGLSL) is toxin-binding domain. Positions 149–208 (PVENRLYTYDHTTILAVVAVVLSSVCLLVIVGLLMFRYHRRGGYDVENEEKVKLGMTNSH) are cleaved as a propeptide — C-terminal. A helical membrane pass occupies residues 161 to 184 (TILAVVAVVLSSVCLLVIVGLLMF). Residues 185–208 (RYHRRGGYDVENEEKVKLGMTNSH) lie on the Cytoplasmic side of the membrane.

In terms of assembly, interacts with EGFR and ERBB4. Interacts with FBLN1. Post-translationally, O-glycosylated.

The protein resides in the secreted. The protein localises to the extracellular space. Its subcellular location is the cell membrane. In terms of biological role, growth factor that mediates its effects via EGFR, ERBB2 and ERBB4. Required for normal cardiac valve formation and normal heart function. Promotes smooth muscle cell proliferation. May be involved in macrophage-mediated cellular proliferation. It is mitogenic for fibroblasts, but not endothelial cells. It is able to bind EGF receptor/EGFR with higher affinity than EGF itself and is a far more potent mitogen for smooth muscle cells than EGF. Also acts as a diphtheria toxin receptor. The sequence is that of Proheparin-binding EGF-like growth factor (HBEGF) from Chlorocebus aethiops (Green monkey).